Reading from the N-terminus, the 537-residue chain is Tyrosine-protein kinase Fyn (537 aa).

A lipid anchor (N-myristoyl glycine) is attached at Gly-2. Residues Cys-3 and Cys-6 are each lipidated (S-palmitoyl cysteine). At Thr-12 the chain carries Phosphothreonine; by PKC. Positions 14–35 (LTEERDGSLNQSSGYRYGTDPT) are disordered. Ser-21 and Ser-26 each carry phosphoserine. Positions 82–143 (TGVTLFVALY…PSNYVAPVDS (62 aa)) constitute an SH3 domain. Residues 149-246 (WYFGKLGRKD…GLCCRLVVPC (98 aa)) enclose the SH2 domain. The residue at position 185 (Tyr-185) is a Phosphotyrosine. The region spanning 271–524 (LQLIKRLGNG…YLQSFLEDYF (254 aa)) is the Protein kinase domain. ATP contacts are provided by residues 277–285 (LGNGQFGEV) and Lys-299. Asp-390 serves as the catalytic Proton acceptor. A Phosphotyrosine; by autocatalysis modification is found at Tyr-420. Phosphotyrosine; by CSK is present on Tyr-531.

The protein belongs to the protein kinase superfamily. Tyr protein kinase family. SRC subfamily. Interacts (via its SH3 domain) with PIK3R1 and PRMT8. Interacts with FYB1, PAG1, and SH2D1A. Interacts with CD79A (tyrosine-phosphorylated form); the interaction increases FYN activity. Interacts (via SH2 domain) with CSF1R (tyrosine phosphorylated). Interacts with TOM1L1 (phosphorylated form). Interacts with KDR (tyrosine phosphorylated). Interacts (via SH3 domain) with KLHL2 (via N-terminus). Interacts with SH2D1A and SLAMF1. Interacts with ITCH; the interaction phosphorylates ITCH and negatively regulates its activity. Interacts with FASLG. Interacts with RUNX3. Interacts with KIT. Interacts with EPHA8; possible downstream effector of EPHA8 in regulation of cell adhesion. Interacts with PTK2/FAK1; this interaction leads to PTK2/FAK1 phosphorylation and activation. Interacts with CAV1; this interaction couples integrins to the Ras-ERK pathway. Interacts with UNC119. Interacts (via SH2 domain) with PTPRH (phosphorylated form). Interacts with PTPRO (phosphorylated form). Interacts with PTPRB (phosphorylated form). Interacts with FYB2. Interacts with DSCAM. Interacts with SKAP1 and FYB1; this interaction promotes the phosphorylation of CLNK. Interacts with NEDD9; in the presence of PTK2. In terms of assembly, (Microbial infection) Interacts (via its SH3 domain) with hepatitis E virus/HEV protein ORF3. The cofactor is Mn(2+). In terms of processing, autophosphorylated at Tyr-420. Phosphorylation on the C-terminal tail at Tyr-531 by CSK maintains the enzyme in an inactive state. PTPRC/CD45 dephosphorylates Tyr-531 leading to activation. Ultraviolet B (UVB) strongly increase phosphorylation at Thr-12 and kinase activity, and promotes translocation from the cytoplasm to the nucleus. Dephosphorylation at Tyr-420 by PTPN2 negatively regulates T-cell receptor signaling. Phosphorylated at tyrosine residues, which can be enhanced by NTN1. Post-translationally, palmitoylated. Palmitoylation at Cys-3 and Cys-6, probably by ZDHHC21, regulates subcellular location. As to expression, isoform 1 is highly expressed in the brain. Isoform 2 is expressed in cells of hemopoietic lineages, especially T-lymphocytes.

The protein localises to the cytoplasm. It localises to the nucleus. The protein resides in the cell membrane. It is found in the perikaryon. The enzyme catalyses L-tyrosyl-[protein] + ATP = O-phospho-L-tyrosyl-[protein] + ADP + H(+). Inhibited by phosphorylation of Tyr-531 by leukocyte common antigen and activated by dephosphorylation of this site. Functionally, non-receptor tyrosine-protein kinase that plays a role in many biological processes including regulation of cell growth and survival, cell adhesion, integrin-mediated signaling, cytoskeletal remodeling, cell motility, immune response and axon guidance. Inactive FYN is phosphorylated on its C-terminal tail within the catalytic domain. Following activation by PKA, the protein subsequently associates with PTK2/FAK1, allowing PTK2/FAK1 phosphorylation, activation and targeting to focal adhesions. Involved in the regulation of cell adhesion and motility through phosphorylation of CTNNB1 (beta-catenin) and CTNND1 (delta-catenin). Regulates cytoskeletal remodeling by phosphorylating several proteins including the actin regulator WAS and the microtubule-associated proteins MAP2 and MAPT. Promotes cell survival by phosphorylating AGAP2/PIKE-A and preventing its apoptotic cleavage. Participates in signal transduction pathways that regulate the integrity of the glomerular slit diaphragm (an essential part of the glomerular filter of the kidney) by phosphorylating several slit diaphragm components including NPHS1, KIRREL1 and TRPC6. Plays a role in neural processes by phosphorylating DPYSL2, a multifunctional adapter protein within the central nervous system, ARHGAP32, a regulator for Rho family GTPases implicated in various neural functions, and SNCA, a small pre-synaptic protein. Involved in reelin signaling by mediating phosphorylation of DAB1 following reelin (RELN)-binding to its receptor. Participates in the downstream signaling pathways that lead to T-cell differentiation and proliferation following T-cell receptor (TCR) stimulation. Phosphorylates PTK2B/PYK2 in response to T-cell receptor activation. Also participates in negative feedback regulation of TCR signaling through phosphorylation of PAG1, thereby promoting interaction between PAG1 and CSK and recruitment of CSK to lipid rafts. CSK maintains LCK and FYN in an inactive form. Promotes CD28-induced phosphorylation of VAV1. In mast cells, phosphorylates CLNK after activation of immunoglobulin epsilon receptor signaling. Can also promote CD244-mediated NK cell activation. This chain is Tyrosine-protein kinase Fyn (FYN), found in Homo sapiens (Human).